Consider the following 85-residue polypeptide: Sec-independent protein translocase protein TatA (85 aa).

A helical membrane pass occupies residues 1–21 (MAGLQGWQLVIIILLAILLFA). Residues 43–85 (VKQMRTEGKDAKDERSGTGSTAADEPVEGRVVDRDETDPRDQR) are disordered. Composition is skewed to basic and acidic residues over residues 44-58 (KQMR…DERS) and 69-85 (VEGR…RDQR).

The protein belongs to the TatA/E family. In terms of assembly, the Tat system comprises two distinct complexes: a TatABC complex, containing multiple copies of TatA, TatB and TatC subunits, and a separate TatA complex, containing only TatA subunits. Substrates initially bind to the TatABC complex, which probably triggers association of the separate TatA complex to form the active translocon.

It is found in the cell membrane. Functionally, part of the twin-arginine translocation (Tat) system that transports large folded proteins containing a characteristic twin-arginine motif in their signal peptide across membranes. TatA could form the protein-conducting channel of the Tat system. This is Sec-independent protein translocase protein TatA from Micrococcus luteus (strain ATCC 4698 / DSM 20030 / JCM 1464 / CCM 169 / CCUG 5858 / IAM 1056 / NBRC 3333 / NCIMB 9278 / NCTC 2665 / VKM Ac-2230) (Micrococcus lysodeikticus).